The sequence spans 233 residues: Achaete-scute homolog 1 (233 aa).

2 disordered regions span residues 1–24 (MESSGKMESGAGQQPQPPQPFLPP) and 39–95 (AAAA…ELMR). Residues 39–62 (AAAAAAQSAQQQQQQQAPQQQAPQ) are compositionally biased toward low complexity. Over residues 78 to 87 (SAAKQVKRQR) the composition is skewed to basic residues. A bHLH domain is found at 115–167 (AAVARRNERERNRVKLVNLGFATLREHVPNGAANKKMSKVETLRSAVEYIRAL). Lys-153 bears the N6-acetyllysine mark.

As to quaternary structure, efficient DNA binding requires dimerization with another bHLH protein. Forms a heterodimer with TCF3. In terms of tissue distribution, developing CNS and PNS at embryonic and postnatal stages.

Its subcellular location is the nucleus. Functionally, transcription factor that plays a key role in neuronal differentiation: acts as a pioneer transcription factor, accessing closed chromatin to allow other factors to bind and activate neural pathways. Directly binds the E box motif (5'-CANNTG-3') on promoters and promotes transcription of neuronal genes. The combination of three transcription factors, ASCL1, POU3F2/BRN2 and MYT1L, is sufficient to reprogram fibroblasts and other somatic cells into induced neuronal (iN) cells in vitro. Plays a role at early stages of development of specific neural lineages in most regions of the CNS, and of several lineages in the PNS. Essential for the generation of olfactory and autonomic neurons. Acts synergistically with FOXN4 to specify the identity of V2b neurons rather than V2a from bipotential p2 progenitors during spinal cord neurogenesis, probably through DLL4-NOTCH signaling activation. Involved in the regulation of neuroendocrine cell development in the glandular stomach. This is Achaete-scute homolog 1 (Ascl1) from Rattus norvegicus (Rat).